Here is a 438-residue protein sequence, read N- to C-terminus: Tyrosine--tRNA ligase (438 aa).

Residue tyrosine 47 participates in L-tyrosine binding. The short motif at 52–61 is the 'HIGH' region element; that stretch reads PTATSLHVGG. Positions 183 and 187 each coordinate L-tyrosine. A 'KMSKS' region motif is present at residues 243–247; sequence KMGKT. Position 246 (lysine 246) interacts with ATP. The S4 RNA-binding domain occupies 370–436; sequence LWIVEALQTA…GKRKYALLKI (67 aa).

Belongs to the class-I aminoacyl-tRNA synthetase family. TyrS type 1 subfamily. In terms of assembly, homodimer.

The protein localises to the cytoplasm. The catalysed reaction is tRNA(Tyr) + L-tyrosine + ATP = L-tyrosyl-tRNA(Tyr) + AMP + diphosphate + H(+). Functionally, catalyzes the attachment of tyrosine to tRNA(Tyr) in a two-step reaction: tyrosine is first activated by ATP to form Tyr-AMP and then transferred to the acceptor end of tRNA(Tyr). This chain is Tyrosine--tRNA ligase, found in Rhodopirellula baltica (strain DSM 10527 / NCIMB 13988 / SH1).